Consider the following 767-residue polypeptide: uncharacterized protein (767 aa).

Disordered regions lie at residues 171–209, 314–340, and 533–566; these read LPVW…LRTP, ETEA…CQEE, and RDHG…PRGF. Composition is skewed to basic and acidic residues over residues 322 to 331 and 552 to 564; these read PDPRPEKDAK and ETKD…RDPR.

This is an uncharacterized protein from Homo sapiens (Human).